The chain runs to 522 residues: Glutathione reductase, mitochondrial (522 aa).

The N-terminal 43 residues, 1 to 43, are a transit peptide targeting the mitochondrion; that stretch reads MALLPRALSSGGRPSWRRAARASRGFPLPLPFPAAATHALSRA. Ser74 and Gly75 together coordinate FAD. Position 74 (Ser74) interacts with glutathione. Position 81 (Arg81) interacts with glutathione. An FAD-binding site is contributed by Glu94. Residue Lys97 is modified to N6-acetyllysine. Positions 101, 102, and 110 each coordinate FAD. A disulfide bond links Cys102 and Cys107. Residue Tyr158 participates in glutathione binding. Ala174 contacts FAD. NADP(+)-binding residues include Ala239, Ile242, Glu245, Arg262, Arg268, and Gly334. Asp375 contacts FAD. Position 381 (Leu381) interacts with NADP(+). Residue Thr383 participates in FAD binding. Arg391 is a binding site for glutathione. Residue Val414 participates in NADP(+) binding. His511 is a binding site for FAD. Catalysis depends on His511, which acts as the Proton acceptor.

It belongs to the class-I pyridine nucleotide-disulfide oxidoreductase family. In terms of assembly, homodimer; disulfide-linked. FAD is required as a cofactor.

It is found in the mitochondrion. Its subcellular location is the cytoplasm. The enzyme catalyses 2 glutathione + NADP(+) = glutathione disulfide + NADPH + H(+). Functionally, catalyzes the reduction of glutathione disulfide (GSSG) to reduced glutathione (GSH). Constitutes the major mechanism to maintain a high GSH:GSSG ratio in the cytosol. This Callithrix jacchus (White-tufted-ear marmoset) protein is Glutathione reductase, mitochondrial (GSR).